Consider the following 326-residue polypeptide: Membrane-associated kinase regulator 5 (326 aa).

2 disordered regions span residues 188–239 (TKKQ…GMSP) and 267–326 (GSRE…KISD). 2 stretches are compositionally biased toward low complexity: residues 190-202 (KQSS…PTSS) and 270-305 (ESSL…SSDS).

In terms of tissue distribution, expressed in roots.

It is found in the cell membrane. It localises to the cytoplasm. The protein resides in the cytosol. In terms of biological role, positive effector of CLE45 peptide signaling. Post-transcriptionally regulated amplifier of the CLE45 peptide signal that acts downstream of BAM3 in the regulation of the transition of root protophloem cells from proliferation to differentiation; thus preventing primary root elongation but stimulating lateral roots development. This Arabidopsis thaliana (Mouse-ear cress) protein is Membrane-associated kinase regulator 5.